The primary structure comprises 328 residues: Aryl-hydrocarbon-interacting protein-like 1 (328 aa).

In terms of domain architecture, PPIase FKBP-type spans Lys53–Gln145. 3 TPR repeats span residues Val178–Leu211, Asn230–Ile263, and Val264–Met297.

As to quaternary structure, interacts with NUB1. In terms of tissue distribution, highly expressed in retina.

The protein resides in the cytoplasm. It localises to the nucleus. May be important in protein trafficking and/or protein folding and stabilization. In Rattus norvegicus (Rat), this protein is Aryl-hydrocarbon-interacting protein-like 1 (Aipl1).